Here is a 798-residue protein sequence, read N- to C-terminus: Heterogeneous nuclear ribonucleoprotein U (798 aa).

Position 2 is an N-acetylserine (Ser2). At Ser4 the chain carries Phosphoserine. One can recognise an SAP domain in the interval 8-42 (VKKLKVSELKEELKKRRLSDKGLKADLMDRLQAAL). An N6-acetyllysine mark is found at Lys17 and Lys21. Residues 41–229 (ALDNEAGGRP…VKRPREDHGR (189 aa)) form a disordered region. Ser58 carries the phosphoserine modification. Composition is skewed to low complexity over residues 71-80 (AGLEQEAAAG) and 103-113 (ENGAAGAADAG). Acidic residues-rich tracts occupy residues 114-128 (AMEEEEAASEDENGD) and 134-147 (EGEDELGDEEEGAG). A compositionally biased stretch (low complexity) spans 153-169 (GEQQSQPPAAAQQASQQ). Lys179 carries the N6-acetyllysine modification. Ser180 carries the ADP-ribosylserine modification. Over residues 192 to 203 (APPGARQGQQQA) the composition is skewed to low complexity. Basic and acidic residues predominate over residues 207 to 229 (GKTEQKAGDKKRGVKRPREDHGR). Arg229 carries the post-translational modification Citrulline. Lys239 carries the N6-acetyllysine; alternate modification. A Glycyl lysine isopeptide (Lys-Gly) (interchain with G-Cter in SUMO1); alternate cross-link involves residue Lys239. A Glycyl lysine isopeptide (Lys-Gly) (interchain with G-Cter in SUMO2); alternate cross-link involves residue Lys239. Tyr240 is subject to Phosphotyrosine. A phosphoserine mark is found at Ser241 and Ser245. Residues 242–438 (RAKSPQPPVE…VEFNFGQKEK (197 aa)) enclose the B30.2/SPRY domain. Thr260 carries the phosphothreonine modification. An N6-acetyllysine modification is found at Lys326. The segment at 462-646 (PKGPEEKKDC…QKLLEQYKEE (185 aa)) is ATPase domain. Residue Lys469 forms a Glycyl lysine isopeptide (Lys-Gly) (interchain with G-Cter in SUMO2) linkage. ATP is bound at residue 478-485 (GLPGAGKT). Lys490 and Lys498 each carry N6-acetyllysine; alternate. Glycyl lysine isopeptide (Lys-Gly) (interchain with G-Cter in SUMO2); alternate cross-links involve residues Lys490 and Lys498. Phosphothreonine is present on Thr506. Lys510 is covalently cross-linked (Glycyl lysine isopeptide (Lys-Gly) (interchain with G-Cter in SUMO2)). N6-acetyllysine is present on Lys525. Residue Lys539 is modified to N6-acetyllysine; alternate. Lys539 is covalently cross-linked (Glycyl lysine isopeptide (Lys-Gly) (interchain with G-Cter in SUMO2); alternate). Lys548 participates in a covalent cross-link: Glycyl lysine isopeptide (Lys-Gly) (interchain with G-Cter in SUMO2). Residue Thr556 is modified to Phosphothreonine. Glycyl lysine isopeptide (Lys-Gly) (interchain with G-Cter in SUMO2) cross-links involve residues Lys583 and Lys600. The interval 585-600 (EDYKQRTQKKAEVEGK) is actin-binding. An N6-acetyllysine; alternate modification is found at Lys609. Lys609 participates in a covalent cross-link: Glycyl lysine isopeptide (Lys-Gly) (interchain with G-Cter in SUMO2); alternate. Positions 624 to 651 (DEITYVELQKEEAQKLLEQYKEESKKAL) form a coiled coil. Glycyl lysine isopeptide (Lys-Gly) (interchain with G-Cter in SUMO2) cross-links involve residues Lys638 and Lys644. A compositionally biased stretch (basic and acidic residues) spans 645–657 (EESKKALPPEKKQ). A disordered region spans residues 645-727 (EESKKALPPE…GSGGIGYPYP (83 aa)). Arg676 carries the post-translational modification Omega-N-methylarginine. The span at 684–702 (GGFNMRGGNFRGGAPGNRG) shows a compositional bias: gly residues. The interval 688-713 (MRGGNFRGGAPGNRGGYNRRGNMPQR) is RNA-binding RGG-box. An asymmetric dimethylarginine mark is found at Arg689, Arg694, and Arg701. Asymmetric dimethylarginine; alternate occurs at positions 707 and 713. 2 positions are modified to omega-N-methylarginine; alternate: Arg707 and Arg713. Over residues 713–723 (RGGGGGSGGIG) the composition is skewed to gly residues. 2 positions are modified to asymmetric dimethylarginine: Arg728 and Arg735. The tract at residues 743-772 (NYNRGGMPNRGNYNQNFRGRGNNRGYKNQS) is disordered. Position 787 is an N6-acetyllysine; alternate (Lys787). Lys787 participates in a covalent cross-link: Glycyl lysine isopeptide (Lys-Gly) (interchain with G-Cter in SUMO2); alternate.

As to quaternary structure, oligomer (via ATPase domain and RNA-binding RGG-box region); oligomerization occurs upon ATP-binding in a chromatin-associated RNAs (caRNAs)- and transcription-dependent manner and is required for chromatin decompaction. ATP hydrolysis is required to cycle from an oligomeric to monomeric state to compact chromatin. Component of the coding region determinant (CRD)-mediated complex, composed of DHX9, HNRNPU, IGF2BP1, SYNCRIP and YBX1. Identified in the spliceosome C complex. Identified in a IGF2BP1-dependent mRNP granule complex containing untranslated mRNAs. Associates with heterogeneous nuclear ribonucleoprotein (hnRNP) particles. Associates (via middle region) with the C-terminal domain (CTD) RNA polymerase II (Pol II) holoenzyme; this association occurs in a RNA-independent manner. Associates (via middle region) with the core-TFIIH basal transcription factor complex; this association inhibits the CTD phosphorylation of RNA polymerase II holoenzyme by down-regulating TFIIH kinase activity. Associates with the telomerase holoenzyme complex. Associates with spindle microtubules (MTs) in a TPX2-dependent manner. Interacts (via C-terminus) with actin; this interaction is direct and mediates association with the phosphorylated CTD of RNA polymerase II and is disrupted in presence of the long non-coding H19 RNA. Interacts with AURKA. Interacts (via C-terminus) with CBX5; this interaction is, at least in part, RNA-dependent. Interacts with CR2. Interacts with CRY1. Interacts (via C-terminus) with EP300; this interaction enhances DNA-binding to nuclear scaffold/matrix attachment region (S/MAR) elements. Interacts with ERBB4. Interacts with GEMIN5. Interacts with IGF2BP1. Interacts with IGF2BP2 and IGF2BP3. Interacts with NCL; this interaction occurs during mitosis. Interacts (via C-terminus) with NR3C1 (via C-terminus). Interacts with PLK1; this interaction induces phosphorylation of HNRNPU at Ser-58 in mitosis. Interacts with POU3F4. Interacts with SMARCA4; this interaction occurs in embryonic stem cells and stimulates global Pol II-mediated transcription. Interacts (via C-terminus) with TOP2A; this interaction protects the topoisomerase TOP2A from degradation and positively regulates the relaxation of supercoiled DNA by TOP2A in a RNA-dependent manner. Interacts with TPX2; this interaction recruits HNRNPU to spindle microtubules (MTs). Interacts with UBQLN2. Interacts (via RNA-binding RGG-box region) with ZBTB7B; the interaction facilitates the recruitment of long non-coding RNA Blnc1 by ZBTB7B. Interacts with ERCC6. Post-translationally, cleaved at Asp-94 by CASP3 during T-cell apoptosis, resulting in a loss of DNA- and chromatin-binding activities. Extensively phosphorylated. Phosphorylated on Ser-58 by PLK1 and dephosphorylated by protein phosphatase 2A (PP2A) in mitosis. In terms of processing, arg-707 and Arg-713 are dimethylated, probably to asymmetric dimethylarginine. Post-translationally, citrullinated by PADI4.

Its subcellular location is the nucleus. The protein localises to the nucleus matrix. It localises to the chromosome. The protein resides in the nucleus speckle. It is found in the cytoplasm. Its subcellular location is the cytoskeleton. The protein localises to the microtubule organizing center. It localises to the centrosome. The protein resides in the centromere. It is found in the kinetochore. Its subcellular location is the spindle. The protein localises to the spindle pole. It localises to the midbody. The protein resides in the cell surface. It is found in the cytoplasmic granule. Functionally, DNA- and RNA-binding protein involved in several cellular processes such as nuclear chromatin organization, telomere-length regulation, transcription, mRNA alternative splicing and stability, Xist-mediated transcriptional silencing and mitotic cell progression. Plays a role in the regulation of interphase large-scale gene-rich chromatin organization through chromatin-associated RNAs (caRNAs) in a transcription-dependent manner, and thereby maintains genomic stability. Required for the localization of the long non-coding Xist RNA on the inactive chromosome X (Xi) and the subsequent initiation and maintenance of X-linked transcriptional gene silencing during X-inactivation. Required for the topoisomerase TOP2A protein stability and activity in a RNA-dependent manner. Plays a role as a RNA polymerase II (Pol II) holoenzyme transcription regulator. Promotes transcription initiation by direct association with the core-TFIIH basal transcription factor complex for the assembly of a functional pre-initiation complex with Pol II in a actin-dependent manner. Blocks Pol II transcription elongation activity by inhibiting the C-terminal domain (CTD) phosphorylation of Pol II and dissociates from Pol II pre-initiation complex prior to productive transcription elongation. Positively regulates CBX5-induced transcriptional gene silencing and retention of CBX5 in the nucleus. Negatively regulates glucocorticoid-mediated transcriptional activation. Key regulator of transcription initiation and elongation in embryonic stem cells upon leukemia inhibitory factor (LIF) signaling. Involved in the long non-coding RNA H19-mediated Pol II transcriptional repression. Participates in the circadian regulation of the core clock component BMAL1 transcription. Plays a role in the regulation of telomere length. Plays a role as a global pre-mRNA alternative splicing modulator by regulating U2 small nuclear ribonucleoprotein (snRNP) biogenesis. Plays a role in mRNA stability. Component of the CRD-mediated complex that promotes MYC mRNA stabilization. Enhances the expression of specific genes, such as tumor necrosis factor TNFA, by regulating mRNA stability, possibly through binding to the 3'-untranslated region (UTR). Plays a role in mitotic cell cycle regulation. Involved in the formation of stable mitotic spindle microtubules (MTs) attachment to kinetochore, spindle organization and chromosome congression. Phosphorylation at Ser-58 by PLK1 is required for chromosome alignement and segregation and progression through mitosis. Also contributes to the targeting of AURKA to mitotic spindle MTs. Binds to double- and single-stranded DNA and RNA, poly(A), poly(C) and poly(G) oligoribonucleotides. Binds to chromatin-associated RNAs (caRNAs). Associates with chromatin to scaffold/matrix attachment region (S/MAR) elements in DNA. Associates with chromatin in a chromatin-associated RNAs (caRNAs)-dependent manner. Binds to the Xist RNA. Binds the long non-coding H19 RNA. Binds to SMN1/2 pre-mRNAs at G/U-rich regions. Binds to small nuclear RNAs (snRNAs). Binds to the 3'-UTR of TNFA mRNA. Binds (via RNA-binding RGG-box region) to the long non-coding Xist RNA; this binding is direct and bridges the Xist RNA and the inactive chromosome X (Xi). Also negatively regulates embryonic stem cell differentiation upon LIF signaling. Required for embryonic development. Binds to brown fat long non-coding RNA 1 (Blnc1); facilitates the recruitment of Blnc1 by ZBTB7B required to drive brown and beige fat development and thermogenesis. The polypeptide is Heterogeneous nuclear ribonucleoprotein U (Rattus norvegicus (Rat)).